We begin with the raw amino-acid sequence, 410 residues long: Neuroserpin (410 aa).

Residues 1-16 form the signal peptide; it reads MYFLGLLSLLVLPSKA. N-linked (GlcNAc...) asparagine glycosylation is found at asparagine 157 and asparagine 401.

The protein belongs to the serpin family. In terms of tissue distribution, detected in embryonic ocular vitreous fluid (at protein level). In the embryo present in retina, brain, cerebellum and spinal cord. In adult, predominantly expressed in the brain.

It is found in the secreted. Its subcellular location is the cytoplasmic vesicle. The protein localises to the secretory vesicle lumen. It localises to the perikaryon. In terms of biological role, serine protease inhibitor that inhibits plasminogen activators and plasmin but not thrombin. May be involved in the formation or reorganization of synaptic connections as well as for synaptic plasticity in the adult nervous system. May protect neurons from cell damage by tissue-type plasminogen activator. The protein is Neuroserpin (SERPINI1) of Gallus gallus (Chicken).